Consider the following 286-residue polypeptide: MPSYEARANVHKSAFAARVLKLVAAKKTNLCASLDVTTTKELIELADKVGPYVCMIKTHIDIIDDFTYAGTVLPLKELALKHGFFLFEDRKFADIGNTVKHQYKNGVYRIAEWSDITNAHGVPGTGIIAGLRAGAEETVSEQKKEDVSDYENSQYKEFLVPSPNEKLARGLLMLAELSCKGSLATGEYSKQTIELARSDPEFVVGFIAQNRPKGDSEDWLILTPGVGLDDKGDALGQQYRTVEDVMSTGTDIIIVGRGLYGQNRDPIEEAKRYQKAGWEAYQKINC.

Substrate is bound by residues Asp-35, 57–59, 89–98, Tyr-239, and Arg-257; these read KTH and DRKFADIGNT. Lys-91 (proton donor) is an active-site residue.

This sequence belongs to the OMP decarboxylase family.

The catalysed reaction is orotidine 5'-phosphate + H(+) = UMP + CO2. Its pathway is pyrimidine metabolism; UMP biosynthesis via de novo pathway; UMP from orotate: step 2/2. This is Orotidine 5'-phosphate decarboxylase (URA3) from Yarrowia lipolytica (strain CLIB 122 / E 150) (Yeast).